Consider the following 1522-residue polypeptide: Myosin-15 (1522 aa).

The 50-residue stretch at 12-61 (RKGDKVWVEDKDLAWIAADVLDSFDNKLHVETSTGKKVFVSPEKLFRRDP) folds into the Myosin N-terminal SH3-like domain. Residues 67–737 (NGVDDMTKLT…QIGILDSRRA (671 aa)) enclose the Myosin motor domain. Residues 161–168 (GESGAGKT) and 214–222 (NDNSSRFGK) each bind ATP. Actin-binding regions lie at residues 499–533 (LIEK…FQNF), 535–558 (FHPR…AGKV), 593–618 (FPSA…KQQL), and 618–640 (LQAL…KPNS). 5 IQ domains span residues 763 to 792 (ARAS…AAAA), 788 to 817 (NAAA…AAIV), 811 to 840 (LVSA…HRAA), 836 to 865 (EHRA…SIIA), and 859 to 888 (RQSS…VANE). Residues 889 to 1059 (AGALRLAKTK…NQVLMQKTLI (171 aa)) are a coiled coil. Residues 1164 to 1456 (NIIIEGINEA…VSQMRVLVDK (293 aa)) enclose the Dilute domain.

Belongs to the TRAFAC class myosin-kinesin ATPase superfamily. Myosin family. Plant myosin class XI subfamily. Homodimer. Interacts with MYOB1 and MYOB7. Interacts with WIT1 and WIT2. Core component of the LINC complex which is composed of inner nuclear membrane SUN domain-containing proteins coupled to outer nuclear membrane WIP and WIT proteins. The LINC complex also involves nucleoskeletal proteins CRWN/LINC and possibly KAKU4 and the cytoskeletal myosin KAKU1.

It is found in the cytoplasm. Its subcellular location is the nucleus membrane. In terms of biological role, myosin heavy chain that is required for the cell cycle-regulated transport of various organelles and proteins for their segregation. Functions by binding with its tail domain to receptor proteins on organelles and exerting force with its N-terminal motor domain against actin filaments, thereby transporting its cargo along polarized actin cables. Involved in trafficking of Golgi stacks and mitochondria. Plays a role in nuclear shape determination. Drives nuclear movement along actin filaments. As component of the SUN-WIP-WIT2-KAKU1 complex, mediates the transfer of cytoplasmic forces to the nuclear envelope (NE), leading to nuclear shape changes. This Arabidopsis thaliana (Mouse-ear cress) protein is Myosin-15 (XI-I).